The chain runs to 105 residues: UPF0235 protein RrIowa_1526 (105 aa).

Belongs to the UPF0235 family.

This is UPF0235 protein RrIowa_1526 from Rickettsia rickettsii (strain Iowa).